The primary structure comprises 88 residues: Cell division topological specificity factor (88 aa).

It belongs to the MinE family.

Prevents the cell division inhibition by proteins MinC and MinD at internal division sites while permitting inhibition at polar sites. This ensures cell division at the proper site by restricting the formation of a division septum at the midpoint of the long axis of the cell. The sequence is that of Cell division topological specificity factor from Aeromonas hydrophila subsp. hydrophila (strain ATCC 7966 / DSM 30187 / BCRC 13018 / CCUG 14551 / JCM 1027 / KCTC 2358 / NCIMB 9240 / NCTC 8049).